Consider the following 701-residue polypeptide: Elongation factor G (701 aa).

In terms of domain architecture, tr-type G spans 11–287 (TKVRNIGIMA…AVIDYLPSPL (277 aa)). GTP is bound by residues 20 to 27 (AHIDAGKT), 84 to 88 (DTPGH), and 138 to 141 (NKMD).

The protein belongs to the TRAFAC class translation factor GTPase superfamily. Classic translation factor GTPase family. EF-G/EF-2 subfamily.

The protein localises to the cytoplasm. Its function is as follows. Catalyzes the GTP-dependent ribosomal translocation step during translation elongation. During this step, the ribosome changes from the pre-translocational (PRE) to the post-translocational (POST) state as the newly formed A-site-bound peptidyl-tRNA and P-site-bound deacylated tRNA move to the P and E sites, respectively. Catalyzes the coordinated movement of the two tRNA molecules, the mRNA and conformational changes in the ribosome. The sequence is that of Elongation factor G from Mycobacterium marinum (strain ATCC BAA-535 / M).